Here is a 349-residue protein sequence, read N- to C-terminus: Small ribosomal subunit protein uS2 (349 aa).

It belongs to the universal ribosomal protein uS2 family.

The protein is Small ribosomal subunit protein uS2 of Methylobacterium nodulans (strain LMG 21967 / CNCM I-2342 / ORS 2060).